The sequence spans 153 residues: Aspartate carbamoyltransferase regulatory chain (153 aa).

The Zn(2+) site is built by Cys-109, Cys-114, Cys-138, and Cys-141.

Belongs to the PyrI family. Contains catalytic and regulatory chains. Zn(2+) is required as a cofactor.

Its function is as follows. Involved in allosteric regulation of aspartate carbamoyltransferase. The protein is Aspartate carbamoyltransferase regulatory chain of Vibrio vulnificus (strain CMCP6).